Reading from the N-terminus, the 419-residue chain is GTPase Obg (419 aa).

The Obg domain maps to 1–156 (MFIDKVNTYL…AEVNLELRLI (156 aa)). In terms of domain architecture, OBG-type G spans 157–325 (ADVGLLGLPN…LLKEMLRMLE (169 aa)). Residues 163-170 (GLPNAGKS), 188-192 (FTTLA), 209-212 (DIPG), 279-282 (NKID), and 306-308 (SAA) contribute to the GTP site. Mg(2+) contacts are provided by Ser170 and Thr190. The region spanning 342-419 (KKYIYEPEFK…IGDFEFTFEK (78 aa)) is the OCT domain.

The protein belongs to the TRAFAC class OBG-HflX-like GTPase superfamily. OBG GTPase family. In terms of assembly, monomer. Requires Mg(2+) as cofactor.

It localises to the cytoplasm. Functionally, an essential GTPase which binds GTP, GDP and possibly (p)ppGpp with moderate affinity, with high nucleotide exchange rates and a fairly low GTP hydrolysis rate. Plays a role in control of the cell cycle, stress response, ribosome biogenesis and in those bacteria that undergo differentiation, in morphogenesis control. The protein is GTPase Obg of Endomicrobium trichonymphae.